The chain runs to 344 residues: MWKLSAILLVAAASAVVIPGHREAPALTGQALIDYVNSAQKLWTAGHQVIPKEKITKKLMDVKYLVPHKDEDIVATEVSDAIPDHFDARDQWPNCMSINNIRDQSDCGSCWAFAAAEAISDRTCIASNGAVNTLLSSEDLLSCCTGMFSCGNGCEGGYPIQAWKWWVKHGLVTGGSYETQFGCKPYSIAPCGETVNGVKWPACPEDTEPTPKCVDSCTSKNNYATPYLQDKHFGSTAYAVGKKVEQIQTEILTNGPIEVAFTVYEDFYQYTTGVYVHTAGASLGGHAVKILGWGVDNGTPYWLVANSWNVAWGEKGYFRIIRGLNECGIEHSAVAGIPDLARHN.

Positions 1 to 15 are cleaved as a signal peptide; sequence MWKLSAILLVAAASA. The propeptide occupies 16–81; sequence VVIPGHREAP…DIVATEVSDA (66 aa). 6 disulfide bridges follow: C95–C124, C107–C154, C143–C213, C144–C150, C183–C217, and C191–C203. C110 is a catalytic residue. Residues H286 and N306 contribute to the active site.

It belongs to the peptidase C1 family.

The sequence is that of Cathepsin B-like cysteine proteinase 5 (cpr-5) from Caenorhabditis elegans.